The primary structure comprises 74 residues: Exodeoxyribonuclease 7 small subunit (74 aa).

The protein belongs to the XseB family. In terms of assembly, heterooligomer composed of large and small subunits.

It localises to the cytoplasm. It catalyses the reaction Exonucleolytic cleavage in either 5'- to 3'- or 3'- to 5'-direction to yield nucleoside 5'-phosphates.. Its function is as follows. Bidirectionally degrades single-stranded DNA into large acid-insoluble oligonucleotides, which are then degraded further into small acid-soluble oligonucleotides. The sequence is that of Exodeoxyribonuclease 7 small subunit from Vesicomyosocius okutanii subsp. Calyptogena okutanii (strain HA).